The following is a 181-amino-acid chain: ATP-dependent protease subunit HslV (181 aa).

T7 is an active-site residue. The Na(+) site is built by A162, C165, and T168.

It belongs to the peptidase T1B family. HslV subfamily. A double ring-shaped homohexamer of HslV is capped on each side by a ring-shaped HslU homohexamer. The assembly of the HslU/HslV complex is dependent on binding of ATP.

It localises to the cytoplasm. It carries out the reaction ATP-dependent cleavage of peptide bonds with broad specificity.. Allosterically activated by HslU binding. In terms of biological role, protease subunit of a proteasome-like degradation complex believed to be a general protein degrading machinery. This is ATP-dependent protease subunit HslV from Coxiella burnetii (strain RSA 493 / Nine Mile phase I).